The sequence spans 246 residues: E3 ubiquitin-protein ligase MARCHF2 (246 aa).

The RING-CH-type zinc-finger motif lies at 56–116; it reads DSQSDCPFCR…ELCHTEFAVE (61 aa). 8 residues coordinate Zn(2+): cysteine 64, cysteine 67, cysteine 80, cysteine 82, histidine 90, cysteine 93, cysteine 106, and cysteine 109. The segment at 121-246 is required for interaction with IKBKG; it reads PLTEWLKDPG…LKKVAEETPV (126 aa). 2 consecutive transmembrane segments (helical) span residues 138-158 and 175-195; these read LCCD…SGWL and AVGL…WTLV.

In terms of assembly, interacts with STX6; the interaction promotes MARCHF2-mediated ubiquitination and degradation of CFTR. Interacts with MARCHF3. Interacts with GOPC/CAL; the interaction leads to CFTR ubiquitination and degradation. Interacts with CFTR; the interaction leads to CFTR ubiqtuitination and degradation. Interacts (via PDZ domain) with DLG1 (via PDZ domains); the interaction leads to DLG1 ubiqtuitination and degradation. Interacts with ERGIC3. Interacts with ADRB2. Interacts with IKBKG/NEMO; during the late stages of macrophage viral and bacterial infection; the interaction leads to ubiquitination and degradation of IKBKG/NEMO.

The protein resides in the endoplasmic reticulum membrane. It is found in the lysosome membrane. It localises to the endosome membrane. The protein localises to the golgi apparatus membrane. Its subcellular location is the cytoplasm. The protein resides in the cell membrane. It carries out the reaction S-ubiquitinyl-[E2 ubiquitin-conjugating enzyme]-L-cysteine + [acceptor protein]-L-lysine = [E2 ubiquitin-conjugating enzyme]-L-cysteine + N(6)-ubiquitinyl-[acceptor protein]-L-lysine.. It participates in protein modification; protein ubiquitination. E3 ubiquitin-protein ligase that may mediate ubiquitination of TFRC and CD86, and promote their subsequent endocytosis and sorting to lysosomes via multivesicular bodies. E3 ubiquitin ligases accept ubiquitin from an E2 ubiquitin-conjugating enzyme in the form of a thioester and then directly transfer the ubiquitin to targeted substrates. Together with GOPC/CAL mediates the ubiquitination and lysosomal degradation of CFTR. Ubiquitinates and therefore mediates the degradation of DLG1. Regulates the intracellular trafficking and secretion of alpha1-antitrypsin/SERPINA1 and HP/haptoglobin via ubiquitination and degradation of the cargo receptor ERGIC3. Negatively regulates the antiviral and antibacterial immune response by repression of the NF-kB and type 1 IFN signaling pathways, via MARCHF2-mediated K48-linked polyubiquitination of IKBKG/NEMO, resulting in its proteasomal degradation. May be involved in endosomal trafficking through interaction with STX6. This Mus musculus (Mouse) protein is E3 ubiquitin-protein ligase MARCHF2 (Marchf2).